The chain runs to 445 residues: Transcription termination factor MTERF15, mitochondrial (445 aa).

A mitochondrion-targeting transit peptide spans 1-25 (MASKLKTFINLRDYPITLFNQIRSL).

Belongs to the mTERF family.

The protein localises to the mitochondrion. In terms of biological role, transcription termination factor required for mitochondrial NAD2 intron 3 splicing and normal membrane respiratory chain Complex I activity. Essential for normal plant growth and development. Binds to RNA but not to double-stranded DNA. The sequence is that of Transcription termination factor MTERF15, mitochondrial from Arabidopsis thaliana (Mouse-ear cress).